A 1401-amino-acid polypeptide reads, in one-letter code: MAP kinase kinase kinase wis4 (1401 aa).

2 disordered regions span residues 67-99 and 176-205; these read HIPLTPSHSGQSEKLMSTRTSHSPYISPTMSYT and QDSISDKSLPSTNQSLHHSEEDTESDNDFS. 2 stretches are compositionally biased toward polar residues: residues 72-99 and 176-191; these read PSHSGQSEKLMSTRTSHSPYISPTMSYT and QDSISDKSLPSTNQSL. In terms of domain architecture, Protein kinase spans 1037–1306; it reads WQQGHFVRSG…AVDLLTHPWI (270 aa). Residues 1043–1051 and K1066 contribute to the ATP site; that span reads VRSGMFGDV. Residue D1161 is the Proton acceptor of the active site.

The protein belongs to the protein kinase superfamily. STE Ser/Thr protein kinase family. MAP kinase kinase kinase subfamily.

The enzyme catalyses L-seryl-[protein] + ATP = O-phospho-L-seryl-[protein] + ADP + H(+). The catalysed reaction is L-threonyl-[protein] + ATP = O-phospho-L-threonyl-[protein] + ADP + H(+). Involved in a signal transduction pathway that is activated in under conditions of heat shock, oxidative stress or limited nutrition. Unlike win1, it is not activated by changes in the osmolarity of the extracellular environment. Activates the wis1 MAP kinase kinase by phosphorylation. The sequence is that of MAP kinase kinase kinase wis4 (wis4) from Schizosaccharomyces pombe (strain 972 / ATCC 24843) (Fission yeast).